The sequence spans 473 residues: Fumarate hydratase class II (473 aa).

Residues 104–106 (SGT), 128–131 (HPND), 138–140 (SSN), and T186 each bind substrate. H187 serves as the catalytic Proton donor/acceptor. Residue S318 is part of the active site. Residues S319 and 324 to 326 (KVN) contribute to the substrate site.

Belongs to the class-II fumarase/aspartase family. Fumarase subfamily. In terms of assembly, homotetramer.

The protein localises to the cytoplasm. The catalysed reaction is (S)-malate = fumarate + H2O. The protein operates within carbohydrate metabolism; tricarboxylic acid cycle; (S)-malate from fumarate: step 1/1. Involved in the TCA cycle. Catalyzes the stereospecific interconversion of fumarate to L-malate. The polypeptide is Fumarate hydratase class II (Corynebacterium efficiens (strain DSM 44549 / YS-314 / AJ 12310 / JCM 11189 / NBRC 100395)).